Here is a 100-residue protein sequence, read N- to C-terminus: Urease subunit gamma (100 aa).

The protein belongs to the urease gamma subunit family. Heterotrimer of UreA (gamma), UreB (beta) and UreC (alpha) subunits. Three heterotrimers associate to form the active enzyme.

It is found in the cytoplasm. The enzyme catalyses urea + 2 H2O + H(+) = hydrogencarbonate + 2 NH4(+). It functions in the pathway nitrogen metabolism; urea degradation; CO(2) and NH(3) from urea (urease route): step 1/1. The protein is Urease subunit gamma of Synechocystis sp. (strain ATCC 27184 / PCC 6803 / Kazusa).